The primary structure comprises 146 residues: MEKTITIYTDGACSGNPGKGGWGALLMYGNTRKEISGYDPATTNNRMEMMAAIRALEALKEPCRVELYSDSAYLVNAMNQGWLKRWLKNGWKTASKKPVENIDLWQEIVKLTTLHRVTFHKVKGHSDNQYNNRCDELARLAIKEQS.

The region spanning 1 to 143 is the RNase H type-1 domain; sequence MEKTITIYTD…CDELARLAIK (143 aa). The Mg(2+) site is built by D10, E48, D70, and D135.

The protein belongs to the RNase H family. In terms of assembly, monomer. Mg(2+) serves as cofactor.

It localises to the cytoplasm. The catalysed reaction is Endonucleolytic cleavage to 5'-phosphomonoester.. Functionally, endonuclease that specifically degrades the RNA of RNA-DNA hybrids. This Chlorobaculum parvum (strain DSM 263 / NCIMB 8327) (Chlorobium vibrioforme subsp. thiosulfatophilum) protein is Ribonuclease H.